Reading from the N-terminus, the 861-residue chain is Alpha-actinin A (861 aa).

The segment at 1–239 (MSEEPTPVSG…VMTYVAQYYH (239 aa)) is actin-binding. Calponin-homology (CH) domains lie at 22–127 (ITQK…LRFA) and 136–242 (LSAK…HHFS). Spectrin repeat units follow at residues 240–365 (HFSA…ALEK), 366–480 (AEQE…TGVK), 481–601 (SSAE…EERK), and 602–714 (VQLA…EQVV). 2 EF-hand domains span residues 729–764 (EELSEFKACFSHFDKDNDNKLNRLEFSSCLKSIGDE) and 765–800 (LTEEQLNQVISKIDTDGNGTISFEEFIDYMVSSRKG). 10 residues coordinate Ca(2+): Asp742, Asp744, Asp746, Lys748, Glu753, Asp778, Asp780, Asn782, Thr784, and Glu789.

This sequence belongs to the alpha-actinin family. In terms of assembly, homodimer; antiparallel.

Its subcellular location is the cytoplasm. It localises to the cell cortex. The protein resides in the contractile vacuole. It is found in the cytoplasmic vesicle. The protein localises to the phagosome. Its function is as follows. F-actin cross-linking protein which is thought to anchor actin to a variety of intracellular structures. This is a bundling protein. Increases the actin-stimulated ATPase activity of myosin. Involved in vegetative cell growth, phagocytosis, motility and development, probably through stabilization of the actin network in the cortical cytoskeleton. This chain is Alpha-actinin A (abpA), found in Dictyostelium discoideum (Social amoeba).